Consider the following 421-residue polypeptide: Serine--tRNA ligase (421 aa).

Position 225-227 (225-227 (TAE)) interacts with L-serine. ATP contacts are provided by residues 256–258 (RSE) and valine 272. Glutamate 279 is an L-serine binding site. 345 to 348 (ETHS) serves as a coordination point for ATP. Threonine 380 lines the L-serine pocket.

Belongs to the class-II aminoacyl-tRNA synthetase family. Type-1 seryl-tRNA synthetase subfamily. As to quaternary structure, homodimer. A single tRNA molecule binds across the dimer.

Its subcellular location is the cytoplasm. It catalyses the reaction tRNA(Ser) + L-serine + ATP = L-seryl-tRNA(Ser) + AMP + diphosphate + H(+). The catalysed reaction is tRNA(Sec) + L-serine + ATP = L-seryl-tRNA(Sec) + AMP + diphosphate + H(+). Its pathway is aminoacyl-tRNA biosynthesis; selenocysteinyl-tRNA(Sec) biosynthesis; L-seryl-tRNA(Sec) from L-serine and tRNA(Sec): step 1/1. Its function is as follows. Catalyzes the attachment of serine to tRNA(Ser). Is also probably able to aminoacylate tRNA(Sec) with serine, to form the misacylated tRNA L-seryl-tRNA(Sec), which will be further converted into selenocysteinyl-tRNA(Sec). In Thermus thermophilus (strain ATCC BAA-163 / DSM 7039 / HB27), this protein is Serine--tRNA ligase (serS).